A 366-amino-acid polypeptide reads, in one-letter code: tRNA/tmRNA (uracil-C(5))-methyltransferase (366 aa).

The S-adenosyl-L-methionine site is built by Q190, Y218, N223, E239, and D299. C324 functions as the Nucleophile in the catalytic mechanism. The active-site Proton acceptor is the E358.

Belongs to the class I-like SAM-binding methyltransferase superfamily. RNA M5U methyltransferase family. TrmA subfamily.

It carries out the reaction uridine(54) in tRNA + S-adenosyl-L-methionine = 5-methyluridine(54) in tRNA + S-adenosyl-L-homocysteine + H(+). The catalysed reaction is uridine(341) in tmRNA + S-adenosyl-L-methionine = 5-methyluridine(341) in tmRNA + S-adenosyl-L-homocysteine + H(+). In terms of biological role, dual-specificity methyltransferase that catalyzes the formation of 5-methyluridine at position 54 (m5U54) in all tRNAs, and that of position 341 (m5U341) in tmRNA (transfer-mRNA). The sequence is that of tRNA/tmRNA (uracil-C(5))-methyltransferase from Klebsiella pneumoniae subsp. pneumoniae (strain ATCC 700721 / MGH 78578).